The primary structure comprises 157 residues: Phosphopantetheine adenylyltransferase (157 aa).

Serine 9 is a binding site for substrate. ATP contacts are provided by residues 9–10 (SF) and histidine 17. Residues lysine 41, leucine 73, and lysine 87 each coordinate substrate. Residues 88–90 (GLR), glutamate 98, and 123–129 (YSYLSSS) each bind ATP.

Belongs to the bacterial CoaD family. In terms of assembly, homohexamer. Mg(2+) serves as cofactor.

It is found in the cytoplasm. The catalysed reaction is (R)-4'-phosphopantetheine + ATP + H(+) = 3'-dephospho-CoA + diphosphate. Its pathway is cofactor biosynthesis; coenzyme A biosynthesis; CoA from (R)-pantothenate: step 4/5. Its function is as follows. Reversibly transfers an adenylyl group from ATP to 4'-phosphopantetheine, yielding dephospho-CoA (dPCoA) and pyrophosphate. This Alkaliphilus metalliredigens (strain QYMF) protein is Phosphopantetheine adenylyltransferase.